A 207-amino-acid chain; its full sequence is Cytochrome c biogenesis ATP-binding export protein CcmA (207 aa).

In terms of domain architecture, ABC transporter spans 4 to 207 (LEARELLCER…RISLTQTRAA (204 aa)). 36 to 43 (GSNGAGKT) provides a ligand contact to ATP.

It belongs to the ABC transporter superfamily. CcmA exporter (TC 3.A.1.107) family. As to quaternary structure, the complex is composed of two ATP-binding proteins (CcmA) and two transmembrane proteins (CcmB).

It is found in the cell inner membrane. The enzyme catalyses heme b(in) + ATP + H2O = heme b(out) + ADP + phosphate + H(+). In terms of biological role, part of the ABC transporter complex CcmAB involved in the biogenesis of c-type cytochromes; once thought to export heme, this seems not to be the case, but its exact role is uncertain. Responsible for energy coupling to the transport system. This Shigella boydii serotype 4 (strain Sb227) protein is Cytochrome c biogenesis ATP-binding export protein CcmA.